A 69-amino-acid chain; its full sequence is Metallothionein-like protein 3 (69 aa).

The protein belongs to the metallothionein superfamily. Type 15 family. As to expression, expressed in leaf mesophyll cells, root tips, and at low levels in anthers.

In terms of biological role, metallothioneins have a high content of cysteine residues that bind various heavy metals. Functions as a metal chelator of copper (Cu) and zinc (Zn). Plays a role in Cu homeostasis, specifically in the remobilization of Cu from senescing leaves. The mobilization of Cu from internal sources is important for seed development. This is Metallothionein-like protein 3 from Arabidopsis thaliana (Mouse-ear cress).